Here is a 488-residue protein sequence, read N- to C-terminus: N-succinylglutamate 5-semialdehyde dehydrogenase (488 aa).

Glycine 221–glycine 226 provides a ligand contact to NAD(+). Active-site residues include glutamate 244 and cysteine 278.

The protein belongs to the aldehyde dehydrogenase family. AstD subfamily.

The enzyme catalyses N-succinyl-L-glutamate 5-semialdehyde + NAD(+) + H2O = N-succinyl-L-glutamate + NADH + 2 H(+). It functions in the pathway amino-acid degradation; L-arginine degradation via AST pathway; L-glutamate and succinate from L-arginine: step 4/5. Catalyzes the NAD-dependent reduction of succinylglutamate semialdehyde into succinylglutamate. This Pseudomonas fluorescens (strain ATCC BAA-477 / NRRL B-23932 / Pf-5) protein is N-succinylglutamate 5-semialdehyde dehydrogenase.